The following is a 348-amino-acid chain: D-alanine--D-alanine ligase (348 aa).

The 209-residue stretch at 136-344 folds into the ATP-grasp domain; that stretch reads KSVFKSYNLP…LEKLVASLIE (209 aa). 171 to 226 contributes to the ATP binding site; sequence NKIINYPCFIKPANLGSSVGITKAYSKEEFITGIEFAAKYDERIIVEKSIEGRELE. Mg(2+) contacts are provided by aspartate 297, glutamate 311, and asparagine 313.

The protein belongs to the D-alanine--D-alanine ligase family. It depends on Mg(2+) as a cofactor. The cofactor is Mn(2+).

Its subcellular location is the cytoplasm. The catalysed reaction is 2 D-alanine + ATP = D-alanyl-D-alanine + ADP + phosphate + H(+). Its pathway is cell wall biogenesis; peptidoglycan biosynthesis. In terms of biological role, cell wall formation. The polypeptide is D-alanine--D-alanine ligase (Prochlorococcus marinus (strain NATL1A)).